We begin with the raw amino-acid sequence, 40 residues long: Photosystem II reaction center protein J (40 aa).

A helical membrane pass occupies residues 8–28; the sequence is IPLWLIGTVTGILVIGLIGVF.

Belongs to the PsbJ family. PSII is composed of 1 copy each of membrane proteins PsbA, PsbB, PsbC, PsbD, PsbE, PsbF, PsbH, PsbI, PsbJ, PsbK, PsbL, PsbM, PsbT, PsbX, PsbY, PsbZ, Psb30/Ycf12, at least 3 peripheral proteins of the oxygen-evolving complex and a large number of cofactors. It forms dimeric complexes.

Its subcellular location is the plastid. It localises to the chloroplast thylakoid membrane. One of the components of the core complex of photosystem II (PSII). PSII is a light-driven water:plastoquinone oxidoreductase that uses light energy to abstract electrons from H(2)O, generating O(2) and a proton gradient subsequently used for ATP formation. It consists of a core antenna complex that captures photons, and an electron transfer chain that converts photonic excitation into a charge separation. The polypeptide is Photosystem II reaction center protein J (Nymphaea alba (White water-lily)).